A 152-amino-acid chain; its full sequence is S-Adenosylmethionine lyase (152 aa).

Homotetramer. Interacts with host METK; this interaction induces the polymerization of METK into filaments that are enzymatically inactive.

The enzyme catalyses S-adenosyl-L-methionine = L-homoserine lactone + S-methyl-5'-thioadenosine. Functionally, degrades the intracellular SAM pools of the host cell and inhibits the host S-adenosylmethionine synthase METK/MAT, thereby preventing methylation of the viral genome. Induces the polymerization of METK into filaments that are enzymatically inactive. Keeping the viral genome in an unmethylated state allows the phage to shift from a lytic infection under normal growth conditions to a transient lysogenic infection under glucose starvation, by blocking its own expression. Does not protect the virus immune against host restriction-modification systems. The polypeptide is S-Adenosylmethionine lyase (Escherichia coli (Bacteriophage T3)).